The chain runs to 250 residues: 3-deoxy-manno-octulosonate cytidylyltransferase (250 aa).

Belongs to the KdsB family.

It localises to the cytoplasm. It carries out the reaction 3-deoxy-alpha-D-manno-oct-2-ulosonate + CTP = CMP-3-deoxy-beta-D-manno-octulosonate + diphosphate. It participates in nucleotide-sugar biosynthesis; CMP-3-deoxy-D-manno-octulosonate biosynthesis; CMP-3-deoxy-D-manno-octulosonate from 3-deoxy-D-manno-octulosonate and CTP: step 1/1. Its pathway is bacterial outer membrane biogenesis; lipopolysaccharide biosynthesis. Activates KDO (a required 8-carbon sugar) for incorporation into bacterial lipopolysaccharide in Gram-negative bacteria. This Sinorhizobium medicae (strain WSM419) (Ensifer medicae) protein is 3-deoxy-manno-octulosonate cytidylyltransferase.